A 288-amino-acid polypeptide reads, in one-letter code: Small ribosomal subunit biogenesis GTPase RsgA (288 aa).

A CP-type G domain is found at 61 to 218 (TNKLIRPPVS…IVDTPGFSSL (158 aa)). GTP-binding positions include 110-113 (NKID) and 161-169 (GPSGVGKST). Zn(2+) contacts are provided by Cys242, Cys247, His249, and Cys255.

Belongs to the TRAFAC class YlqF/YawG GTPase family. RsgA subfamily. In terms of assembly, monomer. Associates with 30S ribosomal subunit, binds 16S rRNA. The cofactor is Zn(2+).

The protein localises to the cytoplasm. In terms of biological role, one of several proteins that assist in the late maturation steps of the functional core of the 30S ribosomal subunit. Helps release RbfA from mature subunits. May play a role in the assembly of ribosomal proteins into the subunit. Circularly permuted GTPase that catalyzes slow GTP hydrolysis, GTPase activity is stimulated by the 30S ribosomal subunit. The sequence is that of Small ribosomal subunit biogenesis GTPase RsgA from Clostridium acetobutylicum (strain ATCC 824 / DSM 792 / JCM 1419 / IAM 19013 / LMG 5710 / NBRC 13948 / NRRL B-527 / VKM B-1787 / 2291 / W).